The sequence spans 121 residues: Small ribosomal subunit protein uS13 (121 aa).

Residues arginine 92–lysine 121 form a disordered region. Residues alanine 106–lysine 121 show a composition bias toward basic residues.

This sequence belongs to the universal ribosomal protein uS13 family. In terms of assembly, part of the 30S ribosomal subunit. Forms a loose heterodimer with protein S19. Forms two bridges to the 50S subunit in the 70S ribosome.

Its function is as follows. Located at the top of the head of the 30S subunit, it contacts several helices of the 16S rRNA. In the 70S ribosome it contacts the 23S rRNA (bridge B1a) and protein L5 of the 50S subunit (bridge B1b), connecting the 2 subunits; these bridges are implicated in subunit movement. Contacts the tRNAs in the A and P-sites. The sequence is that of Small ribosomal subunit protein uS13 from Shouchella clausii (strain KSM-K16) (Alkalihalobacillus clausii).